The primary structure comprises 256 residues: DNA polymerase sliding clamp 2 (256 aa).

Belongs to the PCNA family. Homotrimer. The subunits circularize to form a toroid; DNA passes through its center. Replication factor C (RFC) is required to load the toroid on the DNA.

Sliding clamp subunit that acts as a moving platform for DNA processing. Responsible for tethering the catalytic subunit of DNA polymerase and other proteins to DNA during high-speed replication. The sequence is that of DNA polymerase sliding clamp 2 from Pyrobaculum aerophilum (strain ATCC 51768 / DSM 7523 / JCM 9630 / CIP 104966 / NBRC 100827 / IM2).